The following is a 551-amino-acid chain: Arginine--tRNA ligase (551 aa).

A 'HIGH' region motif is present at residues 124–134; it reads ANPTGPLHIGH.

The protein belongs to the class-I aminoacyl-tRNA synthetase family. As to quaternary structure, monomer.

The protein resides in the cytoplasm. The enzyme catalyses tRNA(Arg) + L-arginine + ATP = L-arginyl-tRNA(Arg) + AMP + diphosphate. This is Arginine--tRNA ligase from Solidesulfovibrio magneticus (strain ATCC 700980 / DSM 13731 / RS-1) (Desulfovibrio magneticus).